Reading from the N-terminus, the 412-residue chain is Tyrosine--tRNA ligase (412 aa).

The short motif at 48 to 57 (PSRPDLHLGH) is the 'HIGH' region element. Positions 232 to 236 (KMSKS) match the 'KMSKS' region motif. Residue Lys-235 participates in ATP binding. The S4 RNA-binding domain occupies 342 to 405 (VGLLNLMRHA…GKRRFARIRP (64 aa)).

This sequence belongs to the class-I aminoacyl-tRNA synthetase family. TyrS type 2 subfamily. In terms of assembly, homodimer.

The protein localises to the cytoplasm. It carries out the reaction tRNA(Tyr) + L-tyrosine + ATP = L-tyrosyl-tRNA(Tyr) + AMP + diphosphate + H(+). Functionally, catalyzes the attachment of tyrosine to tRNA(Tyr) in a two-step reaction: tyrosine is first activated by ATP to form Tyr-AMP and then transferred to the acceptor end of tRNA(Tyr). This is Tyrosine--tRNA ligase from Salinibacter ruber (strain DSM 13855 / M31).